Reading from the N-terminus, the 69-residue chain is Large ribosomal subunit protein bL31 (69 aa).

Cys-17, Cys-19, Cys-37, and Cys-40 together coordinate Zn(2+).

Belongs to the bacterial ribosomal protein bL31 family. Type A subfamily. As to quaternary structure, part of the 50S ribosomal subunit. Zn(2+) is required as a cofactor.

In terms of biological role, binds the 23S rRNA. In Thermoanaerobacter pseudethanolicus (strain ATCC 33223 / 39E) (Clostridium thermohydrosulfuricum), this protein is Large ribosomal subunit protein bL31.